A 618-amino-acid chain; its full sequence is UvrABC system protein C (618 aa).

Positions 15–93 (RTPGVYLMKD…IKEHHPRYNI (79 aa)) constitute a GIY-YIG domain. In terms of domain architecture, UVR spans 203-238 (NNLLRELRERMKMAAEQMNYEEAAFLRDRIRAIEET).

This sequence belongs to the UvrC family. In terms of assembly, interacts with UvrB in an incision complex.

It localises to the cytoplasm. Functionally, the UvrABC repair system catalyzes the recognition and processing of DNA lesions. UvrC both incises the 5' and 3' sides of the lesion. The N-terminal half is responsible for the 3' incision and the C-terminal half is responsible for the 5' incision. The polypeptide is UvrABC system protein C (Syntrophus aciditrophicus (strain SB)).